The primary structure comprises 151 residues: UPF0735 ACT domain-containing protein SERP1207 (151 aa).

Positions 74–149 (TLILYVNDIV…HVTKVDLISM (76 aa)) constitute an ACT domain.

It belongs to the UPF0735 family.

This chain is UPF0735 ACT domain-containing protein SERP1207, found in Staphylococcus epidermidis (strain ATCC 35984 / DSM 28319 / BCRC 17069 / CCUG 31568 / BM 3577 / RP62A).